A 193-amino-acid polypeptide reads, in one-letter code: Acyl carrier protein phosphodiesterase (193 aa).

This sequence belongs to the AcpH family.

It catalyses the reaction holo-[ACP] + H2O = apo-[ACP] + (R)-4'-phosphopantetheine + H(+). Its function is as follows. Converts holo-ACP to apo-ACP by hydrolytic cleavage of the phosphopantetheine prosthetic group from ACP. In Escherichia coli O6:H1 (strain CFT073 / ATCC 700928 / UPEC), this protein is Acyl carrier protein phosphodiesterase.